Reading from the N-terminus, the 338-residue chain is Solute carrier family 35 member G4 (338 aa).

The disordered stretch occupies residues 1-29 (MAGSHPYFNLPDSTHPSPPSTPPSLHWHQ). The next 7 helical transmembrane spans lie at 37-57 (TNGL…VGPL), 160-180 (CGLL…LWTL), 190-210 (GLGY…LLVY), 221-241 (TVAF…LFVL), 250-270 (LLSW…FTCV), 281-301 (LVCA…YFML), and 305-325 (VAPS…IITA). The region spanning 49 to 174 (LPAGFVGPLS…SILGLIIIVG (126 aa)) is the EamA 1 domain. The region spanning 272–325 (YAVTKAHPALVCAVLHSEVVMALILQYFMLHETVAPSDIMGAGVVLGSIAIITA) is the EamA 2 domain.

It belongs to the SLC35G solute transporter family.

It localises to the membrane. In Homo sapiens (Human), this protein is Solute carrier family 35 member G4 (SLC35G4).